The primary structure comprises 245 residues: DNA repair protein RecO (245 aa).

The protein belongs to the RecO family.

Its function is as follows. Involved in DNA repair and RecF pathway recombination. The chain is DNA repair protein RecO from Pectobacterium atrosepticum (strain SCRI 1043 / ATCC BAA-672) (Erwinia carotovora subsp. atroseptica).